The chain runs to 26 residues: Orexigenic neuropeptide 26RFa (26 aa).

Phe-26 is modified (phenylalanine amide).

As to expression, brain.

The protein resides in the secreted. In terms of biological role, may have orexigenic activity. May promote aldosterone secretion by the adrenal gland. This Pelophylax lessonae (Pool frog) protein is Orexigenic neuropeptide 26RFa.